Reading from the N-terminus, the 833-residue chain is Leucine--tRNA ligase (833 aa).

Positions 41 to 52 (PYPSGAGLHVGH) match the 'HIGH' region motif. The 'KMSKS' region motif lies at 610-614 (KMSKS). Lys613 provides a ligand contact to ATP.

The protein belongs to the class-I aminoacyl-tRNA synthetase family.

The protein localises to the cytoplasm. The catalysed reaction is tRNA(Leu) + L-leucine + ATP = L-leucyl-tRNA(Leu) + AMP + diphosphate. This chain is Leucine--tRNA ligase, found in Streptococcus uberis (strain ATCC BAA-854 / 0140J).